The following is a 190-amino-acid chain: NADH-dependent phenylglyoxylate dehydrogenase subunit gamma (190 aa).

As to quaternary structure, dimer of heteropentamers composed of an alpha (PadG), a beta (PadI), a gamma (PadE), a delta (PadF) and an epsilon (PadH) subunit.

The catalysed reaction is phenylglyoxylate + NAD(+) + CoA = benzoyl-CoA + CO2 + NADH. Activated by magnesium ions and thiamine diphosphate. Involved in the anaerobic metabolism of phenylalanine and phenylacetate. Catalyzes the oxidative decarboxylation of phenylglyoxylate to benzoyl-CoA and CO(2). It can also react slowly with 2-oxo-3-methylbutanoate and use different electron acceptors such as benzyl viologen, methyl viologen, FAD or FMN, but NAD seems to be the physiological electron acceptor. Also catalyzes an isotope exchange between CO(2) and the carboxyl group which proves partial or complete reversibility of the oxidative decarboxylation reaction. The polypeptide is NADH-dependent phenylglyoxylate dehydrogenase subunit gamma (padE) (Aromatoleum evansii (Azoarcus evansii)).